A 223-amino-acid chain; its full sequence is Adenylate kinase 4, mitochondrial (223 aa).

A ribonucleoside 5'-triphosphate is bound at residue 15-20; the sequence is GSGKGT. Residues 35-64 are NMP; sequence SSGHLLRENLKTGTEVGDVAKQYLEKGLLV. AMP is bound by residues S36 and R41. K60 carries the post-translational modification N6-succinyllysine. Residues 62–64, 89–92, and Q96 each bind AMP; these read LLV and GFPR. An LID region spans residues 125-162; it reads RRWIHPSSGRVYNLDFNPPQVQGIDDITGEPLVQQEDD. A ribonucleoside 5'-triphosphate contacts are provided by residues R126 and 135 to 136; that span reads VY. R170 provides a ligand contact to AMP. K175 is subject to N6-acetyllysine. N6-acetyllysine; alternate occurs at positions 179 and 186. Residues K179 and K186 each carry the N6-succinyllysine; alternate modification. T199 contributes to the a ribonucleoside 5'-triphosphate binding site.

The protein belongs to the adenylate kinase family. AK3 subfamily. In terms of assembly, monomer. Interacts with SLC25A5/ANT2. Expressed in kidney, liver, stomach, brain, spinal cord, heart, ovary, oviduct, colon, jejunum, ileum and testis (at protein level). In the brain, expressed in the pyramidal cells of the cerebrum and glial cells in the cerebellum (at protein level). In the heart, expressed by myocytes (at protein level). In the kidney, expressed in the proximal to distal tubule in the cortex and the outer and inner zones of the medulla (at protein level). In the stomach, expressed in stratified squamous epithelia in the forestomach and in the gastric pit and mucus producing cells of the glandular stomach (at protein level). Expressed in epithelial cells of the jejunum, ileum, and colon (at protein level). In the testis, expressed by spermatocytes (at protein level). In the ovaries, expressed by oocytes, follicular epithelial cells, and corpus luteum cells (at protein level). In the oviduct, expressed in the epithelia of the isthmus and the ciliated cells of the ampulla (at protein level). Expressed in the pyramidal cells in the hippocampus.

It localises to the mitochondrion matrix. The catalysed reaction is a ribonucleoside 5'-phosphate + ATP = a ribonucleoside 5'-diphosphate + ADP. It carries out the reaction AMP + ATP = 2 ADP. It catalyses the reaction GTP + AMP = GDP + ADP. The enzyme catalyses CMP + ATP = CDP + ADP. The catalysed reaction is GTP + CMP = CDP + GDP. It carries out the reaction dAMP + ATP = dADP + ADP. It catalyses the reaction dCMP + ATP = dCDP + ADP. The enzyme catalyses a 2'-deoxyribonucleoside 5'-diphosphate + ATP = a 2'-deoxyribonucleoside 5'-triphosphate + ADP. The catalysed reaction is a ribonucleoside 5'-diphosphate + ATP = a ribonucleoside 5'-triphosphate + ADP. It carries out the reaction GDP + ATP = GTP + ADP. It catalyses the reaction CDP + GTP = CTP + GDP. The enzyme catalyses CDP + ATP = CTP + ADP. The catalysed reaction is UDP + ATP = UTP + ADP. It carries out the reaction GTP + UDP = UTP + GDP. It catalyses the reaction dADP + GTP = dATP + GDP. The enzyme catalyses dCDP + GTP = dCTP + GDP. The catalysed reaction is dCDP + ATP = dCTP + ADP. It carries out the reaction dGDP + ATP = dGTP + ADP. It catalyses the reaction dTDP + GTP = dTTP + GDP. The enzyme catalyses dTDP + ATP = dTTP + ADP. Functionally, broad-specificity mitochondrial nucleoside phosphate kinase involved in cellular nucleotide homeostasis by catalyzing nucleoside-phosphate interconversions. Similar to other adenylate kinases, preferentially catalyzes the phosphorylation of the nucleoside monophosphate AMP with ATP as phosphate donor to produce ADP. Phosphorylates only AMP when using GTP as phosphate donor. In vitro, can also catalyze the phosphorylation of CMP, dAMP and dCMP and use GTP as an alternate phosphate donor. Moreover, exhibits a diphosphate kinase activity, producing ATP, CTP, GTP, UTP, TTP, dATP, dCTP and dGTP from the corresponding diphosphate substrates with either ATP or GTP as phosphate donors. Plays a role in controlling cellular ATP levels by regulating phosphorylation and activation of the energy sensor protein kinase AMPK. Plays a protective role in the cellular response to oxidative stress. The chain is Adenylate kinase 4, mitochondrial from Mus musculus (Mouse).